Reading from the N-terminus, the 345-residue chain is Dihydroorotase (345 aa).

Positions 13 and 15 each coordinate Zn(2+). Residues 15-17 and Asn41 contribute to the substrate site; that span reads HFR. Zn(2+)-binding residues include Lys98, His135, and His173. Lys98 carries the N6-carboxylysine modification. His135 is a substrate binding site. Leu218 serves as a coordination point for substrate. Asp246 contacts Zn(2+). Asp246 is an active-site residue. 2 residues coordinate substrate: His250 and Ala262.

Belongs to the metallo-dependent hydrolases superfamily. DHOase family. Class II DHOase subfamily. Homodimer. Requires Zn(2+) as cofactor.

The catalysed reaction is (S)-dihydroorotate + H2O = N-carbamoyl-L-aspartate + H(+). It participates in pyrimidine metabolism; UMP biosynthesis via de novo pathway; (S)-dihydroorotate from bicarbonate: step 3/3. Catalyzes the reversible cyclization of carbamoyl aspartate to dihydroorotate. This chain is Dihydroorotase, found in Shewanella frigidimarina (strain NCIMB 400).